Here is a 183-residue protein sequence, read N- to C-terminus: Probable cobalt-precorrin-6B C(15)-methyltransferase (decarboxylating) (183 aa).

Residues Thr-19, 43–47 (GCGSG), Asp-64, and Ala-92 contribute to the S-adenosyl-L-methionine site.

Belongs to the methyltransferase superfamily. Archaeal-type CbiT family.

It catalyses the reaction Co-precorrin-6B + S-adenosyl-L-methionine = Co-precorrin-7 + S-adenosyl-L-homocysteine + CO2. The protein operates within cofactor biosynthesis; adenosylcobalamin biosynthesis; cob(II)yrinate a,c-diamide from sirohydrochlorin (anaerobic route): step 8/10. In terms of biological role, catalyzes the methylation of C-15 in cobalt-precorrin-6B followed by the decarboxylation of C-12 to form cobalt-precorrin-7. This chain is Probable cobalt-precorrin-6B C(15)-methyltransferase (decarboxylating), found in Methanocaldococcus jannaschii (strain ATCC 43067 / DSM 2661 / JAL-1 / JCM 10045 / NBRC 100440) (Methanococcus jannaschii).